Here is a 152-residue protein sequence, read N- to C-terminus: UPF0178 protein SaurJH9_0705 (152 aa).

It belongs to the UPF0178 family.

This Staphylococcus aureus (strain JH9) protein is UPF0178 protein SaurJH9_0705.